We begin with the raw amino-acid sequence, 51 residues long: Glutamine synthetase (51 aa).

Belongs to the glutamine synthetase family. As to quaternary structure, homooctamer.

It localises to the cytoplasm. The catalysed reaction is L-glutamate + NH4(+) + ATP = L-glutamine + ADP + phosphate + H(+). This is Glutamine synthetase from Vitis sp. (Grape).